We begin with the raw amino-acid sequence, 537 residues long: Phosphoenolpyruvate carboxykinase (ATP) (537 aa).

Substrate-binding residues include Arg61, Tyr194, and Lys200. ATP-binding positions include Lys200, His219, and 235–243 (GLSGTGKTT). Mn(2+) is bound by residues Lys200 and His219. Asp256 contacts Mn(2+). 3 residues coordinate ATP: Glu284, Arg322, and Thr448. Arg322 contacts substrate.

It belongs to the phosphoenolpyruvate carboxykinase (ATP) family. Requires Mn(2+) as cofactor.

It localises to the cytoplasm. The catalysed reaction is oxaloacetate + ATP = phosphoenolpyruvate + ADP + CO2. It functions in the pathway carbohydrate biosynthesis; gluconeogenesis. Its function is as follows. Involved in the gluconeogenesis. Catalyzes the conversion of oxaloacetate (OAA) to phosphoenolpyruvate (PEP) through direct phosphoryl transfer between the nucleoside triphosphate and OAA. The chain is Phosphoenolpyruvate carboxykinase (ATP) from Bradyrhizobium sp. (strain ORS 278).